The sequence spans 541 residues: Chaperonin GroEL (541 aa).

Residues 29 to 32 (TLGP), 86 to 90 (DGTTT), Gly-413, 476 to 478 (NAA), and Asp-492 contribute to the ATP site.

It belongs to the chaperonin (HSP60) family. In terms of assembly, forms a cylinder of 14 subunits composed of two heptameric rings stacked back-to-back. Interacts with the co-chaperonin GroES.

The protein resides in the cytoplasm. The catalysed reaction is ATP + H2O + a folded polypeptide = ADP + phosphate + an unfolded polypeptide.. In terms of biological role, together with its co-chaperonin GroES, plays an essential role in assisting protein folding. The GroEL-GroES system forms a nano-cage that allows encapsulation of the non-native substrate proteins and provides a physical environment optimized to promote and accelerate protein folding. This chain is Chaperonin GroEL, found in Enterococcus faecalis (strain ATCC 700802 / V583).